The chain runs to 484 residues: PTS system N-acetylmuramic acid-specific EIIBC component (484 aa).

The PTS EIIB type-1 domain occupies 1-89 (MAKITSNTVS…NQLIDSLTSG (89 aa)). C28 (phosphocysteine intermediate; for EIIB activity) is an active-site residue. In terms of domain architecture, PTS EIIC type-1 spans 125 to 484 (SKFATIFTPL…FFGCKDVDLS (360 aa)). 10 helical membrane passes run 127-147 (FATI…LLGF), 168-188 (LIAY…ILIG), 194-214 (AFGG…LGYN), 228-248 (FFGF…AAII), 266-286 (MILT…LIIM), 310-330 (AAIL…QGFV), 345-365 (LFPI…ALYF), 379-399 (GAII…VTLP), 409-429 (IGGA…LPVG), and 451-471 (IFPG…VGFL).

It localises to the cell inner membrane. The catalysed reaction is N-acetyl-beta-D-muramate(out) + N(pros)-phospho-L-histidyl-[protein] = N-acetyl-beta-D-muramate 6-phosphate(in) + L-histidyl-[protein]. Functionally, the phosphoenolpyruvate-dependent sugar phosphotransferase system (sugar PTS), a major carbohydrate active transport system, catalyzes the phosphorylation of incoming sugar substrates concomitantly with their translocation across the cell membrane. This system is involved in N-acetylmuramic acid (MurNAc) transport, yielding cytoplasmic MurNAc-6-P. Is also able to take up anhydro-N-acetylmuramic acid (anhMurNAc), but cannot phosphorylate the carbon 6, probably because of the 1,6-anhydro ring. This Vibrio parahaemolyticus serotype O3:K6 (strain RIMD 2210633) protein is PTS system N-acetylmuramic acid-specific EIIBC component (murP).